We begin with the raw amino-acid sequence, 457 residues long: Bifunctional protein GlmU (457 aa).

A pyrophosphorylase region spans residues 1 to 227; that stretch reads MTQLSVVILA…FMEVEGANNR (227 aa). UDP-N-acetyl-alpha-D-glucosamine is bound by residues 9–12, K23, Q74, 79–80, 101–103, G138, E152, N167, and N225; these read LAAG, GT, and YGD. D103 serves as a coordination point for Mg(2+). Mg(2+) is bound at residue N225. A linker region spans residues 228-248; the sequence is LQLAALERFYQKTQAEKLLLA. Residues 249 to 457 form an N-acetyltransferase region; sequence GVRLIDPARF…QRPTKKKIAD (209 aa). UDP-N-acetyl-alpha-D-glucosamine is bound by residues R331 and K349. H361 functions as the Proton acceptor in the catalytic mechanism. The UDP-N-acetyl-alpha-D-glucosamine site is built by Y364 and N375. Residues A378, 384 to 385, S403, A421, and R438 each bind acetyl-CoA; that span reads NY.

The protein in the N-terminal section; belongs to the N-acetylglucosamine-1-phosphate uridyltransferase family. This sequence in the C-terminal section; belongs to the transferase hexapeptide repeat family. Homotrimer. It depends on Mg(2+) as a cofactor.

It localises to the cytoplasm. The enzyme catalyses alpha-D-glucosamine 1-phosphate + acetyl-CoA = N-acetyl-alpha-D-glucosamine 1-phosphate + CoA + H(+). The catalysed reaction is N-acetyl-alpha-D-glucosamine 1-phosphate + UTP + H(+) = UDP-N-acetyl-alpha-D-glucosamine + diphosphate. The protein operates within nucleotide-sugar biosynthesis; UDP-N-acetyl-alpha-D-glucosamine biosynthesis; N-acetyl-alpha-D-glucosamine 1-phosphate from alpha-D-glucosamine 6-phosphate (route II): step 2/2. Its pathway is nucleotide-sugar biosynthesis; UDP-N-acetyl-alpha-D-glucosamine biosynthesis; UDP-N-acetyl-alpha-D-glucosamine from N-acetyl-alpha-D-glucosamine 1-phosphate: step 1/1. It functions in the pathway bacterial outer membrane biogenesis; LPS lipid A biosynthesis. In terms of biological role, catalyzes the last two sequential reactions in the de novo biosynthetic pathway for UDP-N-acetylglucosamine (UDP-GlcNAc). The C-terminal domain catalyzes the transfer of acetyl group from acetyl coenzyme A to glucosamine-1-phosphate (GlcN-1-P) to produce N-acetylglucosamine-1-phosphate (GlcNAc-1-P), which is converted into UDP-GlcNAc by the transfer of uridine 5-monophosphate (from uridine 5-triphosphate), a reaction catalyzed by the N-terminal domain. The chain is Bifunctional protein GlmU from Actinobacillus pleuropneumoniae serotype 5b (strain L20).